The following is a 253-amino-acid chain: Triosephosphate isomerase (253 aa).

N9–K11 lines the substrate pocket. Residue H97 is the Electrophile of the active site. E169 functions as the Proton acceptor in the catalytic mechanism. Residues G175, S215, and G236 to G237 contribute to the substrate site.

It belongs to the triosephosphate isomerase family. As to quaternary structure, homodimer.

The protein localises to the cytoplasm. It catalyses the reaction D-glyceraldehyde 3-phosphate = dihydroxyacetone phosphate. Its pathway is carbohydrate biosynthesis; gluconeogenesis. It functions in the pathway carbohydrate degradation; glycolysis; D-glyceraldehyde 3-phosphate from glycerone phosphate: step 1/1. Functionally, involved in the gluconeogenesis. Catalyzes stereospecifically the conversion of dihydroxyacetone phosphate (DHAP) to D-glyceraldehyde-3-phosphate (G3P). The polypeptide is Triosephosphate isomerase (Staphylococcus epidermidis (strain ATCC 35984 / DSM 28319 / BCRC 17069 / CCUG 31568 / BM 3577 / RP62A)).